The following is a 112-amino-acid chain: Protein 4.2 (112 aa).

The interval 64 to 93 is disordered; that stretch reads KPDGLNHQVTQGKKSHTQSQQTGPTTLTSD. Over residues 70–92 the composition is skewed to polar residues; it reads HQVTQGKKSHTQSQQTGPTTLTS.

This Escherichia phage T7 (Bacteriophage T7) protein is Protein 4.2.